A 97-amino-acid chain; its full sequence is Putative defensin-like protein 227 (97 aa).

An N-terminal signal peptide occupies residues 1-26 (MKWATLFMVSCVLMFFVMNNINEVES). 4 disulfides stabilise this stretch: C35-C97, C45-C76, C53-C91, and C74-C93.

It belongs to the DEFL family.

Its subcellular location is the secreted. In Arabidopsis thaliana (Mouse-ear cress), this protein is Putative defensin-like protein 227 (SCRL28).